We begin with the raw amino-acid sequence, 457 residues long: MLRLQNLPKLVRRFATTALPKTETTTLKNGLTVATEHHPYAQTATVLVGVDAGSRAETAKNNGAAHFLEHLAFKGTKNRSQKALELEFENTGAHLNAYTSREQTVYYAHAFKNAVPNAVAVLADILTNSSISASAVERERQVILREQEEVDKMADEVVFDHLHATAYQGHPLGRTILGPKENIESLTREDLLQYIKDNYRSDRMIISSAGSISHEELVKLAEKYFGHLEPSAEQLSLGAPRGLKPRFVGSEIRARDDDSPTANIAIAVEGMSWKHPDYFTALVMQAIIGNWDRAMGASPHLSSRLSTIVQQHQLANSFMSFSTSYSDTGLWGIYLVTENLGRIDDLVHFTLQNWARLTVATRAEVERAKAQLRASLLLSLDSTTAIAEDIGRQLLTTGRRMSPQEVDLRIGQITEKDVARVASEMIWDKDIAVSAVGSIEGLLDYNRIRSSISMNRW.

H66 lines the Zn(2+) pocket. Catalysis depends on E69, which acts as the Proton acceptor. Residues H70 and E146 each contribute to the Zn(2+) site.

It belongs to the peptidase M16 family. In terms of assembly, heterodimer of mas2 (alpha) and qcr1 (beta) subunits, forming the mitochondrial processing protease (MPP) in which mas2 is involved in substrate recognition and binding and qcr1 is the catalytic subunit. It depends on Zn(2+) as a cofactor.

It is found in the mitochondrion matrix. The enzyme catalyses Release of N-terminal transit peptides from precursor proteins imported into the mitochondrion, typically with Arg in position P2.. Binding to mas2 is required for catalytic activity. Catalytic subunit of the essential mitochondrial processing protease (MPP), which cleaves the mitochondrial sequence off newly imported precursors proteins. Preferentially, cleaves after an arginine at position P2. In Schizosaccharomyces pombe (strain 972 / ATCC 24843) (Fission yeast), this protein is Probable mitochondrial-processing peptidase subunit beta (qcr1).